The sequence spans 151 residues: Calmodulin-like protein 9 (151 aa).

4 consecutive EF-hand domains span residues 8-43 (EQIQEFYEAFCLIDKDSDGFITKEKLTKVMKSMGKN), 44-79 (PKAEQLQQMMSDVDIFGNGGITFDDFLYIMAQNTSQ), 81-116 (SASDELIEVFRVFDRDGDGLISQLELGEGMKDMGMK), and 117-151 (ITAEEAEHMVREADLDGDGFLSFHEFSKMMIAASY). Residues Asp-94, Asp-96, Asp-98, Glu-105, Asp-130, Asp-132, Asp-134, and Glu-141 each coordinate Ca(2+).

This sequence belongs to the calmodulin family. Interacts with IQD1. Interacts with ILK1. Binds to ABCG36. Expressed in leaves, flowers and siliques.

Functionally, potential calcium sensor. The chain is Calmodulin-like protein 9 from Arabidopsis thaliana (Mouse-ear cress).